A 156-amino-acid chain; its full sequence is Small ribosomal subunit protein uS7 (156 aa).

This sequence belongs to the universal ribosomal protein uS7 family. As to quaternary structure, part of the 30S ribosomal subunit. Contacts proteins S9 and S11.

Its function is as follows. One of the primary rRNA binding proteins, it binds directly to 16S rRNA where it nucleates assembly of the head domain of the 30S subunit. Is located at the subunit interface close to the decoding center, probably blocks exit of the E-site tRNA. The chain is Small ribosomal subunit protein uS7 from Streptococcus uberis (strain ATCC BAA-854 / 0140J).